We begin with the raw amino-acid sequence, 206 residues long: Geminin (206 aa).

Positions 1 to 18 (MNLSMKQKQEGAQENVKN) are enriched in polar residues. The segment at 1 to 42 (MNLSMKQKQEGAQENVKNSPVPRRTLKMIQPSADGSLVGREN) is disordered. Residue K27 is modified to N6-acetyllysine. Phosphoserine is present on residues S36, S63, and S64. Residues 79 to 158 (TQEAFDLISK…AEVIERLSNE (80 aa)) are necessary and sufficient for interaction with IDAS and CDT1. Positions 91 to 141 (PSSQYWKEVAEQRRKALYEALKENEKLHKEIEQKDSEIARLRKENKDLAEV) form a coiled coil. A disordered region spans residues 157–206 (NEPLDNFESPDSQEFDSEEEAVEYSELEDSGAGTCAEETVSSSTDARPCT). Acidic residues predominate over residues 167-185 (DSQEFDSEEEAVEYSELED). Residues 167–187 (DSQEFDSEEEAVEYSELEDSG) are homeodomain binding. S181 carries the phosphoserine; by CK2 modification. A compositionally biased stretch (polar residues) spans 195–206 (TVSSSTDARPCT).

The protein belongs to the geminin family. As to quaternary structure, homotetramer. Interacts with CDT1; this inhibits binding of the MCM complex to origins of replication. The complex with CDT1 exists in two forms, a 'permissive' heterotrimer and an 'inhibitory' heterohexamer. Interacts (via coiled-coil domain) with IDAS (via coiled-coil domain); this targets GMNN to the nucleus. The heterodimer formed by GMNN and MCIDAS has much lower affinity for CDT1 than the GMNN homodimer. Interacts with a subset of Hox proteins, affinity increasing from anterior to posterior types, the strongest interaction being with HOXB1, HOXC9 and HOXD10. Interacts with LRWD1 from G1/S to mitosis. Post-translationally, phosphorylated during mitosis. Phosphorylation at Ser-181 by CK2 results in enhanced binding to Hox proteins and more potent inhibitory effect on Hox transcriptional activity.

It is found in the cytoplasm. Its subcellular location is the nucleus. Functionally, inhibits DNA replication by preventing the incorporation of MCM complex into pre-replication complex (pre-RC). It is degraded during the mitotic phase of the cell cycle. Its destruction at the metaphase-anaphase transition permits replication in the succeeding cell cycle. Inhibits histone acetyltransferase activity of KAT7/HBO1 in a CDT1-dependent manner, inhibiting histone H4 acetylation and DNA replication licensing. Inhibits the transcriptional activity of a subset of Hox proteins, enrolling them in cell proliferative control. In Mus musculus (Mouse), this protein is Geminin (Gmnn).